The chain runs to 56 residues: Large ribosomal subunit protein bL32 (56 aa).

The disordered stretch occupies residues 1 to 23 (MAVQQNKSTRSKRGMRRSHNALP). Over residues 9–19 (TRSKRGMRRSH) the composition is skewed to basic residues.

This sequence belongs to the bacterial ribosomal protein bL32 family.

The sequence is that of Large ribosomal subunit protein bL32 from Blochmanniella floridana.